The sequence spans 423 residues: Gamma-glutamyl phosphate reductase (423 aa).

This sequence belongs to the gamma-glutamyl phosphate reductase family.

It is found in the cytoplasm. It catalyses the reaction L-glutamate 5-semialdehyde + phosphate + NADP(+) = L-glutamyl 5-phosphate + NADPH + H(+). It participates in amino-acid biosynthesis; L-proline biosynthesis; L-glutamate 5-semialdehyde from L-glutamate: step 2/2. In terms of biological role, catalyzes the NADPH-dependent reduction of L-glutamate 5-phosphate into L-glutamate 5-semialdehyde and phosphate. The product spontaneously undergoes cyclization to form 1-pyrroline-5-carboxylate. The protein is Gamma-glutamyl phosphate reductase of Burkholderia ambifaria (strain ATCC BAA-244 / DSM 16087 / CCUG 44356 / LMG 19182 / AMMD) (Burkholderia cepacia (strain AMMD)).